A 217-amino-acid chain; its full sequence is Elongation factor Ts (217 aa).

The interval 82–85 is involved in Mg(2+) ion dislocation from EF-Tu; sequence TDFV.

This sequence belongs to the EF-Ts family.

The protein resides in the cytoplasm. In terms of biological role, associates with the EF-Tu.GDP complex and induces the exchange of GDP to GTP. It remains bound to the aminoacyl-tRNA.EF-Tu.GTP complex up to the GTP hydrolysis stage on the ribosome. The sequence is that of Elongation factor Ts from Desulforamulus reducens (strain ATCC BAA-1160 / DSM 100696 / MI-1) (Desulfotomaculum reducens).